The sequence spans 376 residues: Nuclear hormone receptor family member nhr-124 (376 aa).

The segment at residues 11–89 (PNICAICHQK…LGMRYHNSSE (79 aa)) is a DNA-binding region (nuclear receptor). 2 consecutive NR C4-type zinc fingers follow at residues 14–34 (CAIC…CNAC) and 50–72 (CKKG…CRSC). The NR LBD domain maps to 125 to 371 (HLHALNETRY…FSKILTEACR (247 aa)).

The protein belongs to the nuclear hormone receptor family.

The protein localises to the nucleus. Orphan nuclear receptor. The chain is Nuclear hormone receptor family member nhr-124 (nhr-124) from Caenorhabditis elegans.